A 138-amino-acid polypeptide reads, in one-letter code: Acidic phospholipase A2 VP7 (138 aa).

The signal sequence occupies residues 1–16; the sequence is MRTLWIVAVCLMGVEG. 7 disulfide bridges follow: Cys-42-Cys-131, Cys-44-Cys-60, Cys-59-Cys-111, Cys-65-Cys-138, Cys-66-Cys-104, Cys-73-Cys-97, and Cys-91-Cys-102. 3 residues coordinate Ca(2+): Tyr-43, Gly-45, and Gly-47. Residue His-63 is part of the active site. Asp-64 provides a ligand contact to Ca(2+). Asp-105 is an active-site residue.

The protein belongs to the phospholipase A2 family. Group II subfamily. D49 sub-subfamily. As to quaternary structure, does not form a complex. It depends on Ca(2+) as a cofactor. As to expression, expressed by the venom gland.

Its subcellular location is the secreted. The catalysed reaction is a 1,2-diacyl-sn-glycero-3-phosphocholine + H2O = a 1-acyl-sn-glycero-3-phosphocholine + a fatty acid + H(+). Functionally, snake venom phospholipase A2 (PLA2) that is not toxic by itself, but the synergistical mixture of a basic and this acidic protein is lethal. PLA2 catalyzes the calcium-dependent hydrolysis of the 2-acyl groups in 3-sn-phosphoglycerides. The protein is Acidic phospholipase A2 VP7 of Daboia palaestinae (Palestine viper).